Here is a 1214-residue protein sequence, read N- to C-terminus: Spliceosome-associated protein 130 A (1214 aa).

The disordered stretch occupies residues 817–848 (AGGVGENGNGNADQMENGADDEDKEDPLSDEQ). The segment covering 834-845 (GADDEDKEDPLS) has biased composition (acidic residues).

This sequence belongs to the RSE1 family. In terms of assembly, identified in the spliceosome C complex. Component of the U11/U12 snRNPs that are part of the U12-type spliceosome. Component of splicing factor SF3B complex. In terms of tissue distribution, expressed at low levels in roots, leaves, inflorescence and, to a lower extent, in siliques.

It is found in the nucleus. Subunit of the splicing factor SF3B required for 'A' complex assembly formed by the stable binding of U2 snRNP to the branchpoint sequence (BPS) in pre-mRNA. Sequence independent binding of SF3A/SF3B complex upstream of the branch site is essential, it may anchor U2 snRNP to the pre-mRNA. May also be involved in the assembly of the 'E' complex. Also belongs to the minor U12-dependent spliceosome, which is involved in the splicing of rare class of nuclear pre-mRNA intron. Required for pollen and ovule development, especially during the transition from microspore to the bicellular stage in pollen development. Involved in the accumulation of QRT1 and QRT3. In Arabidopsis thaliana (Mouse-ear cress), this protein is Spliceosome-associated protein 130 A.